We begin with the raw amino-acid sequence, 758 residues long: Glucan endo-1,3-beta-D-glucosidase (758 aa).

A signal peptide (tat-type signal) is located at residues 1 to 34 (MSHASRRRWRRATTSAATAALLCGALLTFPSAPA). The segment at 38–251 (VRLGSGSYTT…SGYASVALLP (214 aa)) is beta-sandwich subdomain. The region spanning 38–704 (VRLGSGSYTT…QWLSTLAEFG (667 aa)) is the GH81 domain. The segment at 252–342 (SPDDFDRYAP…EGDRFTTELT (91 aa)) is alpha/beta subdomain. Residues 352–704 (TVDSADHQRL…QWLSTLAEFG (353 aa)) are (alpha/beta)6 barrel subdomain. Positions 382, 386, 457, 461, 532, 534, and 538 each coordinate (1,3-beta-D-glucosyl)n. D457 is a catalytic residue. Catalysis depends on residues E534 and E538.

The protein belongs to the glycosyl hydrolase 81 family. In terms of processing, predicted to be exported by the Tat system. The position of the signal peptide cleavage has not been experimentally proven.

It is found in the secreted. The catalysed reaction is Hydrolysis of (1-&gt;3)-beta-D-glucosidic linkages in (1-&gt;3)-beta-D-glucans.. In terms of biological role, cleaves internal linkages in 1,3-beta-glucan. May contribute to biomass degradation by hydrolyzing the 1,3-beta-linked plant polymer callose that is present in decomposing plant tissue. This Thermobifida fusca (strain YX) protein is Glucan endo-1,3-beta-D-glucosidase.